A 934-amino-acid chain; its full sequence is Coiled-coil domain-containing protein 39 (934 aa).

Coiled-coil stretches lie at residues 17–133 (IPVA…DGLK), 164–512 (SQQD…HNDL), 540–615 (VDRS…SQIR), and 664–826 (VIKA…EQDI). A disordered region spans residues 866–934 (LPTAKGPSSR…NIPKGKKLNK (69 aa)). A compositionally biased stretch (low complexity) spans 873–892 (SSRSSSQSSLSSIRSLEDSI). Residues Ser-887 and Ser-895 each carry the phosphoserine modification. Residues 912-925 (RSDSSRSSSGSNSN) are compositionally biased toward low complexity.

Belongs to the CCDC39 family.

The protein resides in the cytoplasm. It is found in the cytoskeleton. It localises to the cilium axoneme. Required for assembly of dynein regulatory complex (DRC) and inner dynein arm (IDA) complexes, which are responsible for ciliary beat regulation, thereby playing a central role in motility in cilia and flagella. Probably acts together with CCDC40 to form a molecular ruler that determines the 96 nanometer (nm) repeat length and arrangements of components in cilia and flagella. Not required for outer dynein arm complexes assembly. The protein is Coiled-coil domain-containing protein 39 (Ccdc39) of Rattus norvegicus (Rat).